Here is a 159-residue protein sequence, read N- to C-terminus: Ribosomal RNA large subunit methyltransferase H (159 aa).

Residues Leu76, Gly108, and 127–132 contribute to the S-adenosyl-L-methionine site; that span reads FGLLTL.

The protein belongs to the RNA methyltransferase RlmH family. Homodimer.

The protein localises to the cytoplasm. The enzyme catalyses pseudouridine(1915) in 23S rRNA + S-adenosyl-L-methionine = N(3)-methylpseudouridine(1915) in 23S rRNA + S-adenosyl-L-homocysteine + H(+). Functionally, specifically methylates the pseudouridine at position 1915 (m3Psi1915) in 23S rRNA. The chain is Ribosomal RNA large subunit methyltransferase H from Streptococcus pyogenes serotype M3 (strain SSI-1).